Here is a 382-residue protein sequence, read N- to C-terminus: MRYLTAGESHGPKLVGILEGVPSGAKIDKETIDQALQERQKGPGRGGRMKIEKDQVTILSGVRGGLTTGAPIALEIINRDWANWEKIMAWGDEADLESRKVITPRPGHADLTGHLKYRTEVRNVLERASARETAMRVAIGNIAVQILEALGVEIRGQVLSVGKVHMNSEDTPEYWQRVQASEWKVGDPQGEEALYTQLQEARSKGESLGGVLQIQVQNLLPGLGSYVQWDRKLDGRLAQAVLSVQAIKGVAFGMGFAAGQHFGSEVHDPIGYDSGRGYYRYSNNAGGIEGGMTNGEPVIIEAVMKPIPTLYSPLSTVNLETKEVMEASVERSDVCAVPAALVVLKHVAAWEILQAILEKFPADTWDELDKAWHDYKRFVSER.

R39 and R45 together coordinate NADP(+). FMN contacts are provided by residues 127-129 (RAS), 245-246 (QA), G290, 305-309 (KPIPT), and R331.

It belongs to the chorismate synthase family. As to quaternary structure, homotetramer. The cofactor is FMNH2.

The catalysed reaction is 5-O-(1-carboxyvinyl)-3-phosphoshikimate = chorismate + phosphate. The protein operates within metabolic intermediate biosynthesis; chorismate biosynthesis; chorismate from D-erythrose 4-phosphate and phosphoenolpyruvate: step 7/7. Its function is as follows. Catalyzes the anti-1,4-elimination of the C-3 phosphate and the C-6 proR hydrogen from 5-enolpyruvylshikimate-3-phosphate (EPSP) to yield chorismate, which is the branch point compound that serves as the starting substrate for the three terminal pathways of aromatic amino acid biosynthesis. This reaction introduces a second double bond into the aromatic ring system. The polypeptide is Chorismate synthase (Desulfitobacterium hafniense (strain Y51)).